The chain runs to 161 residues: Small heat shock protein ibp (161 aa).

The sHSP domain maps to 35-150 (EKPLSDTPAY…KPKKIFINIP (116 aa)).

This sequence belongs to the small heat shock protein (HSP20) family.

The sequence is that of Small heat shock protein ibp (ibp) from Buchnera aphidicola subsp. Schizaphis graminum (strain Sg).